Reading from the N-terminus, the 197-residue chain is Glycerol-3-phosphate acyltransferase (197 aa).

The next 4 membrane-spanning stretches (helical) occupy residues M1–V21, P78–L98, V112–A132, and V155–W175.

It belongs to the PlsY family. Probably interacts with PlsX.

The protein resides in the cell inner membrane. The enzyme catalyses an acyl phosphate + sn-glycerol 3-phosphate = a 1-acyl-sn-glycero-3-phosphate + phosphate. It functions in the pathway lipid metabolism; phospholipid metabolism. Its function is as follows. Catalyzes the transfer of an acyl group from acyl-phosphate (acyl-PO(4)) to glycerol-3-phosphate (G3P) to form lysophosphatidic acid (LPA). This enzyme utilizes acyl-phosphate as fatty acyl donor, but not acyl-CoA or acyl-ACP. The polypeptide is Glycerol-3-phosphate acyltransferase (Aromatoleum aromaticum (strain DSM 19018 / LMG 30748 / EbN1) (Azoarcus sp. (strain EbN1))).